Reading from the N-terminus, the 95-residue chain is Small ribosomal subunit protein bS6 (95 aa).

The protein belongs to the bacterial ribosomal protein bS6 family.

Functionally, binds together with bS18 to 16S ribosomal RNA. This is Small ribosomal subunit protein bS6 from Aster yellows witches'-broom phytoplasma (strain AYWB).